A 348-amino-acid polypeptide reads, in one-letter code: Anthranilate phosphoribosyltransferase (348 aa).

Residues Gly93, 96 to 97 (GD), Thr101, 103 to 106 (NVST), 121 to 129 (KHGNRAVSS), and Ser133 contribute to the 5-phospho-alpha-D-ribose 1-diphosphate site. Gly93 contacts anthranilate. Residue Ser105 participates in Mg(2+) binding. Asn124 contacts anthranilate. An anthranilate-binding site is contributed by Arg179. Positions 238 and 239 each coordinate Mg(2+).

Belongs to the anthranilate phosphoribosyltransferase family. As to quaternary structure, homodimer. The cofactor is Mg(2+).

It catalyses the reaction N-(5-phospho-beta-D-ribosyl)anthranilate + diphosphate = 5-phospho-alpha-D-ribose 1-diphosphate + anthranilate. It functions in the pathway amino-acid biosynthesis; L-tryptophan biosynthesis; L-tryptophan from chorismate: step 2/5. In terms of biological role, catalyzes the transfer of the phosphoribosyl group of 5-phosphorylribose-1-pyrophosphate (PRPP) to anthranilate to yield N-(5'-phosphoribosyl)-anthranilate (PRA). In Desulfotalea psychrophila (strain LSv54 / DSM 12343), this protein is Anthranilate phosphoribosyltransferase.